The sequence spans 641 residues: ATP-dependent DNA helicase PIF1 (641 aa).

The segment at 1-180 (MLSGIEAAAG…LVKRPVEPQA (180 aa)) is PINT. A phosphoserine mark is found at Ser-27 and Ser-151. Residues 167-641 (PDTTLVKRPV…SDQENMDPIL (475 aa)) are hydrolyzes ATP in the presence of both magnesium and single-stranded DNA; weak activity in the presence of RNA or double-stranded DNA; No unwinding activity. The tract at residues 173 to 192 (KRPVEPQAGAEPSTEAPRWP) is disordered. 228–235 (GSAGTGKS) is an ATP binding site. A DNA-binding region spans residues 577–596 (QAYVALSRARSLQGLRVLDF). Positions 622–641 (LESPDDDEAASDQENMDPIL) are disordered. The span at 624–641 (SPDDDEAASDQENMDPIL) shows a compositional bias: acidic residues.

The protein belongs to the helicase family. PIF1 subfamily. As to quaternary structure, monomer. Interacts with telomerase. The cofactor is Mg(2+). As to expression, weak ubiquitous expression.

Its subcellular location is the nucleus. The protein resides in the mitochondrion. It catalyses the reaction Couples ATP hydrolysis with the unwinding of duplex DNA at the replication fork by translocating in the 5'-3' direction. This creates two antiparallel DNA single strands (ssDNA). The leading ssDNA polymer is the template for DNA polymerase III holoenzyme which synthesizes a continuous strand.. The catalysed reaction is ATP + H2O = ADP + phosphate + H(+). Its function is as follows. DNA-dependent ATPase and 5'-3' DNA helicase required for the maintenance of both mitochondrial and nuclear genome stability. Efficiently unwinds G-quadruplex (G4) DNA structures and forked RNA-DNA hybrids. Resolves G4 structures, preventing replication pausing and double-strand breaks (DSBs) at G4 motifs. Involved in the maintenance of telomeric DNA. Inhibits telomere elongation, de novo telomere formation and telomere addition to DSBs via catalytic inhibition of telomerase. Reduces the processivity of telomerase by displacing active telomerase from DNA ends. Releases telomerase by unwinding the short telomerase RNA/telomeric DNA hybrid that is the intermediate in the telomerase reaction. Possesses an intrinsic strand annealing activity. The polypeptide is ATP-dependent DNA helicase PIF1 (Homo sapiens (Human)).